A 187-amino-acid chain; its full sequence is Ribosome-recycling factor (187 aa).

Belongs to the RRF family.

It is found in the cytoplasm. In terms of biological role, responsible for the release of ribosomes from messenger RNA at the termination of protein biosynthesis. May increase the efficiency of translation by recycling ribosomes from one round of translation to another. This chain is Ribosome-recycling factor, found in Methylorubrum extorquens (strain CM4 / NCIMB 13688) (Methylobacterium extorquens).